Consider the following 247-residue polypeptide: uncharacterized protein (247 aa).

NADP(+) contacts are provided by L11, N85, and K119. The Proton donor role is filled by S136. NADP(+)-binding residues include Y150, K154, V181, and T183. Y150 (proton acceptor) is an active-site residue. The Lowers pKa of active site Tyr role is filled by K154.

Belongs to the short-chain dehydrogenases/reductases (SDR) family.

This is an uncharacterized protein from Schizosaccharomyces pombe (strain 972 / ATCC 24843) (Fission yeast).